Reading from the N-terminus, the 513-residue chain is NADH-quinone oxidoreductase chain 13 (513 aa).

14 consecutive transmembrane segments (helical) span residues 3-23 (NLLSIITFLPIVAAIIMALFL), 34-54 (AKWLALLTTTATFVISLFVLF), 81-101 (VDGISVLFVLLTTFMMPLTIL), 112-132 (EYMIAFLVLEGLMIGVFTALD), 133-153 (LVLFYLFFEAGLIPMFLIIGI), 164-184 (FKFFLYTFLGSVLMLVAMIAM), 211-231 (MTVVGGMQMLLFLAFFASFAV), 250-270 (PTAGSVLLAAVLLKMGGYGFL), 277-297 (FPVASGVAQPYVFWLSAIAIV), 312-332 (VIAYSSVAHMGYVTMGVFAAN), 340-360 (IFQMLSHGFISGALFLCVGVI), 383-403 (AAVFMFFTMANVGLPGTSGFV), 418-438 (WVALVATSGVILSAAYALWLY), and 463-483 (WVFIPLIAMTLILGVYPRLVT).

It belongs to the complex I subunit 4 family. As to quaternary structure, NDH-1 is composed of at least 14 different subunits, Nqo1 to Nqo14. The complex has a L-shaped structure, with the hydrophobic arm (subunits Nqo7, Nqo8, Nqo10 to Nqo14) embedded in the inner membrane and the hydrophilic peripheral arm (subunits Nqo1 to Nqo6, Nqo9) protruding into the bacterial cytoplasm. The hydrophilic domain contains all the redox centers.

The protein resides in the cell inner membrane. It carries out the reaction a quinone + NADH + 5 H(+)(in) = a quinol + NAD(+) + 4 H(+)(out). Functionally, NDH-1 shuttles electrons from NADH, via FMN and iron-sulfur (Fe-S) centers, to quinones in the respiratory chain. The immediate electron acceptor for the enzyme in this species is believed to be ubiquinone. Couples the redox reaction to proton translocation (for every two electrons transferred, four hydrogen ions are translocated across the cytoplasmic membrane), and thus conserves the redox energy in a proton gradient. The polypeptide is NADH-quinone oxidoreductase chain 13 (Paracoccus denitrificans).